Reading from the N-terminus, the 574-residue chain is MIRQFVSHRGIPCYRLAVRRVELTEPFHHPSPWPLGRKNWSTSDEAKSKRAAMRKGGAPPPEHEDWELTVGIEIHAQLDTDAKLFSSASAALDDVPNSNIALFDIALPGSQPLFQPSTLIPAIRAAIALNCDVQRVSRFDRKHYFYQDQPAGYQITQYYEPYAKNGSIWLGAHDGIAKEDGEGVQIGIKQIQMEQDTAKSQELPSSTYLLDFNRVSRPLIEIITLPQIHSATTAAACVRKIQAILQSVGAVTTGMEMGGLRADVNVSVRKRSEAAGDHQYDGVAGLGQRTEIKNLSSFKAVEYAIIAERDRQIAVLKAGGTIQGETRGWTLGSTETRKLRGKEGEVDYRYMPDPDLGPVIIGDDVISDLRRNIPGLPDELLQMLVQDPKYGLSTVDAKTLIELDDGQRLEYYQDAVEILTTLQPDLSADFSAGKVVGNWVLHELGGLLTKSSAHWDSQRVPAQSLAEIINLLSRKNITSSSAKSLLAMAFDGDKRSISQIVEDKNLLFQSLSRHEYLALAEEVMRQNPKMVSEIREKAQLGKMGWLVGQIKRIGDPNRVEAQKAEEILRELILK.

The N-terminal 12 residues, 1-12 (MIRQFVSHRGIP), are a transit peptide targeting the mitochondrion. Residues 34–62 (PLGRKNWSTSDEAKSKRAAMRKGGAPPPE) form a disordered region.

The protein belongs to the GatB/GatE family. GatB subfamily. Subunit of the heterotrimeric GatCAB amidotransferase (AdT) complex, composed of A, B and C subunits.

It localises to the mitochondrion. The enzyme catalyses L-glutamyl-tRNA(Gln) + L-glutamine + ATP + H2O = L-glutaminyl-tRNA(Gln) + L-glutamate + ADP + phosphate + H(+). Allows the formation of correctly charged Gln-tRNA(Gln) through the transamidation of misacylated Glu-tRNA(Gln) in the mitochondria. The reaction takes place in the presence of glutamine and ATP through an activated gamma-phospho-Glu-tRNA(Gln). The polypeptide is Glutamyl-tRNA(Gln) amidotransferase subunit B, mitochondrial (Ajellomyces capsulatus (strain H143) (Darling's disease fungus)).